The sequence spans 237 residues: 7-cyano-7-deazaguanine synthase (237 aa).

14–24 (FSGGQDSATCL) serves as a coordination point for ATP. Zn(2+)-binding residues include cysteine 202, cysteine 217, cysteine 220, and cysteine 223.

It belongs to the QueC family. Zn(2+) serves as cofactor.

The catalysed reaction is 7-carboxy-7-deazaguanine + NH4(+) + ATP = 7-cyano-7-deazaguanine + ADP + phosphate + H2O + H(+). It participates in purine metabolism; 7-cyano-7-deazaguanine biosynthesis. Its function is as follows. Catalyzes the ATP-dependent conversion of 7-carboxy-7-deazaguanine (CDG) to 7-cyano-7-deazaguanine (preQ(0)). In Rhodopseudomonas palustris (strain TIE-1), this protein is 7-cyano-7-deazaguanine synthase.